Consider the following 315-residue polypeptide: Thymidylate synthase (315 aa).

DUMP-binding positions include R22 and 177-178 (RR). C197 (nucleophile) is an active-site residue. Residues 217-220 (RSAD), N228, and 258-260 (HLY) each bind dUMP. D220 contributes to the (6R)-5,10-methylene-5,6,7,8-tetrahydrofolate binding site. A314 serves as a coordination point for (6R)-5,10-methylene-5,6,7,8-tetrahydrofolate.

The protein belongs to the thymidylate synthase family. Bacterial-type ThyA subfamily. As to quaternary structure, homodimer.

It is found in the cytoplasm. It carries out the reaction dUMP + (6R)-5,10-methylene-5,6,7,8-tetrahydrofolate = 7,8-dihydrofolate + dTMP. The protein operates within pyrimidine metabolism; dTTP biosynthesis. In terms of biological role, catalyzes the reductive methylation of 2'-deoxyuridine-5'-monophosphate (dUMP) to 2'-deoxythymidine-5'-monophosphate (dTMP) while utilizing 5,10-methylenetetrahydrofolate (mTHF) as the methyl donor and reductant in the reaction, yielding dihydrofolate (DHF) as a by-product. This enzymatic reaction provides an intracellular de novo source of dTMP, an essential precursor for DNA biosynthesis. The polypeptide is Thymidylate synthase (Enterococcus faecalis (strain ATCC 700802 / V583)).